A 406-amino-acid polypeptide reads, in one-letter code: ATPase ASNA1 homolog (406 aa).

21 to 28 lines the ATP pocket; that stretch reads KGGVGKTT. The active site involves D62. Residues E300 and N327 each contribute to the ATP site. Residues C339 and C342 each coordinate Zn(2+).

This sequence belongs to the arsA ATPase family. In terms of assembly, homodimer.

The protein localises to the cytoplasm. Its subcellular location is the endoplasmic reticulum. Functionally, ATPase required for the post-translational delivery of tail-anchored (TA) proteins to the endoplasmic reticulum. Recognizes and selectively binds the transmembrane domain of TA proteins in the cytosol. This complex then targets to the endoplasmic reticulum by membrane-bound receptors, where the tail-anchored protein is released for insertion. This process is regulated by ATP binding and hydrolysis. ATP binding drives the homodimer towards the closed dimer state, facilitating recognition of newly synthesized TA membrane proteins. ATP hydrolysis is required for insertion. Subsequently, the homodimer reverts towards the open dimer state, lowering its affinity for the membrane-bound receptor, and returning it to the cytosol to initiate a new round of targeting. This is ATPase ASNA1 homolog from Leishmania braziliensis.